The chain runs to 417 residues: Laccase-like protein claX (417 aa).

It belongs to the multicopper oxidase family.

Laccase-like protein; part of the gene cluster that mediates the biosynthesis of clavilactone A, a meroterpenoid that features a unique benzo-fused ten-membered carbocyclic ring unit with an alpha,beta-epoxy-gamma-lactone moiety, forming an intriguing 10/5/3 tricyclic nested skeleton. ClaR, ClaS and ClaT are sufficient to produce clavilactone A and the function of claX, if any, has still to be identified. The biosynthesis begins with the prenyltransferase claS that transfers geranyl pyrophosphate (GPP) to hydroquinone to produces geranylhydroquinon. The cytochrome P450 monooxygenase claR then catalyzes the diradical coupling reaction between the intramolecular hydroquinone and allyl moieties to form the benzo-fused ten-membered carbocyclic ring unit of wigantol. Finally the cytochrome P450 monooxygenase claT exquisitely and stereoselectively assembles the alpha,beta-epoxy-gamma-lactone moiety, producing clavilactone A via arnebinol A. This chain is Laccase-like protein claX, found in Ampulloclitocybe clavipes (Club foot).